We begin with the raw amino-acid sequence, 361 residues long: Histidinol-phosphate aminotransferase (361 aa).

Lys-224 is modified (N6-(pyridoxal phosphate)lysine).

This sequence belongs to the class-II pyridoxal-phosphate-dependent aminotransferase family. Histidinol-phosphate aminotransferase subfamily. In terms of assembly, homodimer. Pyridoxal 5'-phosphate serves as cofactor.

The catalysed reaction is L-histidinol phosphate + 2-oxoglutarate = 3-(imidazol-4-yl)-2-oxopropyl phosphate + L-glutamate. The protein operates within amino-acid biosynthesis; L-histidine biosynthesis; L-histidine from 5-phospho-alpha-D-ribose 1-diphosphate: step 7/9. The polypeptide is Histidinol-phosphate aminotransferase (Bacillus licheniformis (strain ATCC 14580 / DSM 13 / JCM 2505 / CCUG 7422 / NBRC 12200 / NCIMB 9375 / NCTC 10341 / NRRL NRS-1264 / Gibson 46)).